Here is a 372-residue protein sequence, read N- to C-terminus: Lipoyl synthase, mitochondrial (372 aa).

The N-terminal 27 residues, 1–27 (MSLRCGDAARTLGPRVFGRYFCSPVRP), are a transit peptide targeting the mitochondrion. Residues C106, C111, C117, C137, C141, C144, and S352 each contribute to the [4Fe-4S] cluster site. The region spanning 122–341 (EYATATATIM…EKVGNELGFH (220 aa)) is the Radical SAM core domain.

Belongs to the radical SAM superfamily. Lipoyl synthase family. The cofactor is [4Fe-4S] cluster.

It is found in the mitochondrion. The catalysed reaction is [[Fe-S] cluster scaffold protein carrying a second [4Fe-4S](2+) cluster] + N(6)-octanoyl-L-lysyl-[protein] + 2 oxidized [2Fe-2S]-[ferredoxin] + 2 S-adenosyl-L-methionine + 4 H(+) = [[Fe-S] cluster scaffold protein] + N(6)-[(R)-dihydrolipoyl]-L-lysyl-[protein] + 4 Fe(3+) + 2 hydrogen sulfide + 2 5'-deoxyadenosine + 2 L-methionine + 2 reduced [2Fe-2S]-[ferredoxin]. The protein operates within protein modification; protein lipoylation via endogenous pathway; protein N(6)-(lipoyl)lysine from octanoyl-[acyl-carrier-protein]: step 2/2. In terms of biological role, catalyzes the radical-mediated insertion of two sulfur atoms into the C-6 and C-8 positions of the octanoyl moiety bound to the lipoyl domains of lipoate-dependent enzymes, thereby converting the octanoylated domains into lipoylated derivatives. The chain is Lipoyl synthase, mitochondrial from Homo sapiens (Human).